The sequence spans 760 residues: Exostosin-1 (760 aa).

Over 1–6 (MQAKKR) the chain is Cytoplasmic. The chain crosses the membrane as a helical; Signal-anchor for type II membrane protein span at residues 7–25 (YILVFVSCAFLAYAYFGGY). At 26–760 (RLKVSPLRPR…KYRQIELVGS (735 aa)) the chain is on the lumenal side. N71 and N327 each carry an N-linked (GlcNAc...) asparagine glycan. A UDP-N-acetyl-alpha-D-glucosamine-binding site is contributed by R437. N476 carries an N-linked (GlcNAc...) asparagine glycan. A disordered region spans residues 540–560 (LGGSTRSQGAGPTSQTTEGRP). Residues 541–560 (GGSTRSQGAGPTSQTTEGRP) show a composition bias toward polar residues. UDP-N-acetyl-alpha-D-glucosamine-binding residues include R565, D581, E582, D583, E669, D670, and R713. D583 lines the Mn(2+) pocket. A disulfide bridge connects residues C668 and C716. The active site involves D670.

It belongs to the glycosyltransferase 47 family. Interacts with sau. It depends on Mn(2+) as a cofactor. As to expression, ubiquitously expressed in early embryos. Later (in stage 10 embryos), it is expressed at higher level in the nervous system. Ubiquitously expressed in wing imaginal disk.

The protein resides in the endoplasmic reticulum membrane. Its subcellular location is the golgi apparatus membrane. The enzyme catalyses 3-O-{[(1-&gt;4)-beta-D-GlcA-(1-&gt;4)-alpha-D-GlcNAc](n)-(1-&gt;4)-beta-D-GlcA-(1-&gt;3)-beta-D-Gal-(1-&gt;3)-beta-D-Gal-(1-&gt;4)-beta-D-Xyl}-L-seryl-[protein] + UDP-N-acetyl-alpha-D-glucosamine = 3-O-{alpha-D-GlcNAc-[(1-&gt;4)-beta-D-GlcA-(1-&gt;4)-alpha-D-GlcNAc](n)-(1-&gt;4)-beta-D-GlcA-(1-&gt;3)-beta-D-Gal-(1-&gt;3)-beta-D-Gal-(1-&gt;4)-beta-D-Xyl}-L-seryl-[protein] + UDP + H(+). It carries out the reaction 3-O-{alpha-D-GlcNAc-[(1-&gt;4)-beta-D-GlcA-(1-&gt;4)-alpha-D-GlcNAc](n)-(1-&gt;4)-beta-D-GlcA-(1-&gt;3)-beta-D-Gal-(1-&gt;3)-beta-D-Gal-(1-&gt;4)-beta-D-Xyl}-L-seryl-[protein] + UDP-alpha-D-glucuronate = 3-O-{[(1-&gt;4)-beta-D-GlcA-(1-&gt;4)-alpha-D-GlcNAc](n+1)-(1-&gt;4)-beta-D-GlcA-(1-&gt;3)-beta-D-Gal-(1-&gt;3)-beta-D-Gal-(1-&gt;4)-beta-D-Xyl}-L-seryl-[protein] + UDP + H(+). It functions in the pathway protein modification; protein glycosylation. The protein operates within glycan metabolism; heparan sulfate biosynthesis. Its pathway is glycan metabolism; heparin biosynthesis. Functionally, glycosyltransferase required for the biosynthesis of heparan-sulfate and responsible for the alternating addition of beta-1-4-linked glucuronic acid (GlcA) and alpha-1-4-linked N-acetylglucosamine (GlcNAc) units to nascent heparan sulfate chains. Botv is the trigger of heparan sulfate chain initiation and polymerization takes place by a complex of ttv and sotv. Plays a central role in the diffusion of morphogens hedgehog (hh), wingless (wg) and decapentaplegic (dpp) via its role in heparan sulfate proteoglycans (HSPGs) biosynthesis which are required for movement of hh, dpp and wg morphogens. This chain is Exostosin-1 (ttv), found in Drosophila melanogaster (Fruit fly).